The chain runs to 157 residues: DNA gyrase inhibitor (157 aa).

This sequence belongs to the DNA gyrase inhibitor family. In terms of assembly, interacts with DNA gyrase.

Its subcellular location is the cytoplasm. In terms of biological role, inhibits the supercoiling activity of DNA gyrase. Acts by inhibiting DNA gyrase at an early step, prior to (or at the step of) binding of DNA by the gyrase. It protects cells against toxins that target DNA gyrase, by inhibiting activity of these toxins and reducing the formation of lethal double-strand breaks in the cell. This chain is DNA gyrase inhibitor, found in Citrobacter rodentium (strain ICC168) (Citrobacter freundii biotype 4280).